Reading from the N-terminus, the 413-residue chain is Serine hydroxymethyltransferase (413 aa).

Residues Leu-118 and 122–124 (GHL) each bind (6S)-5,6,7,8-tetrahydrofolate. N6-(pyridoxal phosphate)lysine is present on Lys-228.

The protein belongs to the SHMT family. Homodimer. Pyridoxal 5'-phosphate serves as cofactor.

Its subcellular location is the cytoplasm. The enzyme catalyses (6R)-5,10-methylene-5,6,7,8-tetrahydrofolate + glycine + H2O = (6S)-5,6,7,8-tetrahydrofolate + L-serine. The protein operates within one-carbon metabolism; tetrahydrofolate interconversion. It participates in amino-acid biosynthesis; glycine biosynthesis; glycine from L-serine: step 1/1. Its function is as follows. Catalyzes the reversible interconversion of serine and glycine with tetrahydrofolate (THF) serving as the one-carbon carrier. This reaction serves as the major source of one-carbon groups required for the biosynthesis of purines, thymidylate, methionine, and other important biomolecules. Also exhibits THF-independent aldolase activity toward beta-hydroxyamino acids, producing glycine and aldehydes, via a retro-aldol mechanism. The sequence is that of Serine hydroxymethyltransferase from Phytoplasma australiense.